The following is a 684-amino-acid chain: Acetophenone carboxylase delta subunit (684 aa).

The protein belongs to the oxoprolinase family. In terms of assembly, acetophenone carboxylase consists of five subunits; a heterooctameric subcomplex of two alpha (Apc1), two beta (Apc2), two gamma (Apc3) and two delta (Apc4) subunits assembles with the epsilon (Apc5) subunit in an unknown stoichiometry. It depends on Mg(2+) as a cofactor. Mn(2+) is required as a cofactor.

Its subcellular location is the cytoplasm. The catalysed reaction is acetophenone + hydrogencarbonate + 2 ATP + H2O = 3-oxo-3-phenylpropanoate + 2 ADP + 2 phosphate + 2 H(+). With respect to regulation, inhibited by zinc ions, carbamoylphosphate and beta,gamma-imido-ATP. In terms of biological role, catalyzes the carboxylation of acetophenone to form 3-oxo-3-phenylpropanoate (benzoylacetate) in the anaerobic catabolism of ethylbenzene. Also carboxylates propiophenone at the same rate and 4-acetyl-pyridine at lower rates. This Aromatoleum aromaticum (strain DSM 19018 / LMG 30748 / EbN1) (Azoarcus sp. (strain EbN1)) protein is Acetophenone carboxylase delta subunit (apc4).